The sequence spans 496 residues: Neuronal acetylcholine receptor subunit beta-4 (496 aa).

An N-terminal signal peptide occupies residues methionine 1–glycine 19. The Extracellular portion of the chain corresponds to aspartate 20 to threonine 236. N-linked (GlcNAc...) asparagine glycosylation is found at asparagine 36, asparagine 93, asparagine 138, and asparagine 166. The cysteines at positions 153 and 167 are disulfide-linked. Residues isoleucine 237–proline 257 form a helical membrane-spanning segment. Over serine 258–threonine 265 the chain is Cytoplasmic. Glutamate 262 is a Na(+) binding site. Residues leucine 266–proline 286 form a helical membrane-spanning segment. At proline 287–tyrosine 298 the chain is on the extracellular side. Residues leucine 299–valine 319 traverse the membrane as a helical segment. The Cytoplasmic portion of the chain corresponds to histidine 320–arginine 464. Residues leucine 465–proline 485 traverse the membrane as a helical segment. Residues leucine 486–proline 496 lie on the Extracellular side of the membrane.

Belongs to the ligand-gated ion channel (TC 1.A.9) family. Acetylcholine receptor (TC 1.A.9.1) subfamily. Beta-4/CHRNB4 sub-subfamily. As to quaternary structure, neuronal AChR is composed of two different types of subunits: alpha and beta. CHRNB4/Beta-4 subunit can be combined to CHRNA2/alpha-2, CHRNA3/alpha-3 or CHRNA4/alpha-4, CHRNA5/alpha-5 and CHRNB3/beta-3 to give rise to functional receptors. Forms stoichiometries such as (CHRNA3)2:(CHRNB4)3 or (CHRNA3:CHRNB4)2:CHRNB3. Interacts with RIC3; which is required for proper folding and assembly. Interacts with LYPD6.

Its subcellular location is the synaptic cell membrane. The protein resides in the cell membrane. It catalyses the reaction Ca(2+)(in) = Ca(2+)(out). The catalysed reaction is K(+)(in) = K(+)(out). The enzyme catalyses Na(+)(in) = Na(+)(out). In terms of biological role, component of neuronal acetylcholine receptors (nAChRs) that function as pentameric, ligand-gated cation channels with high calcium permeability among other activities. nAChRs are excitatory neurotrasnmitter receptors formed by a collection of nAChR subunits known to mediate synaptic transmission in the nervous system and the neuromuscular junction. Each nAchR subunit confers differential attributes to channel properties, including activation, deactivation and desensitization kinetics, pH sensitivity, cation permeability, and binding to allosteric modulators. CHRNB4 forms heteropentameric neuronal acetylcholine receptors with CHRNA2, CHRNA3 and CHRNA4, as well as CHRNA5 and CHRNB3 as accesory subunits. CHRNA3:CHRNB4 being predominant in neurons of the autonomic ganglia, it is known as ganglionic nicotinic receptor. CHRNA3:CHRNB4 or CHRNA3:CHRNA5:CHRNB4 play also an important role in the habenulo-interpeduncular tract, modulating the mesolimbic dopamine system and affecting reward circuits and addiction. Hypothalamic CHRNA3:CHRNB4 nAChR activation by nicotine leads to activation of POMC neurons and a decrease in food intake. This chain is Neuronal acetylcholine receptor subunit beta-4 (CHRNB4), found in Bos taurus (Bovine).